Here is a 405-residue protein sequence, read N- to C-terminus: L-rhamnonate dehydratase (405 aa).

Substrate-binding residues include histidine 33 and arginine 59. Mg(2+) is bound by residues aspartate 226, glutamate 252, and glutamate 280. The active-site Proton acceptor is the histidine 329. Glutamate 349 contacts substrate.

The protein belongs to the mandelate racemase/muconate lactonizing enzyme family. RhamD subfamily. As to quaternary structure, homooctamer; tetramer of dimers. Requires Mg(2+) as cofactor.

It carries out the reaction L-rhamnonate = 2-dehydro-3-deoxy-L-rhamnonate + H2O. Its function is as follows. Catalyzes the dehydration of L-rhamnonate to 2-keto-3-deoxy-L-rhamnonate (KDR). The chain is L-rhamnonate dehydratase from Salmonella paratyphi A (strain AKU_12601).